A 61-amino-acid chain; its full sequence is Small ribosomal subunit protein uS14 (61 aa).

Positions 24, 27, 40, and 43 each coordinate Zn(2+).

It belongs to the universal ribosomal protein uS14 family. Zinc-binding uS14 subfamily. Part of the 30S ribosomal subunit. Contacts proteins S3 and S10. Requires Zn(2+) as cofactor.

In terms of biological role, binds 16S rRNA, required for the assembly of 30S particles and may also be responsible for determining the conformation of the 16S rRNA at the A site. In Deinococcus geothermalis (strain DSM 11300 / CIP 105573 / AG-3a), this protein is Small ribosomal subunit protein uS14.